The primary structure comprises 131 residues: uncharacterized protein (131 aa).

The first 16 residues, 1–16 (MDVLFVAIFAVPLILG), serve as a signal peptide directing secretion.

The protein resides in the secreted. This is an uncharacterized protein from Homo sapiens (Human).